We begin with the raw amino-acid sequence, 67 residues long: Kappa-conotoxin-like 1 (67 aa).

Residues 1–26 form the signal peptide; it reads MMFRLTSVSCFLLVIACLNLFQVVLT. Cystine bridges form between cysteine 29–cysteine 43, cysteine 36–cysteine 48, cysteine 42–cysteine 51, and cysteine 47–cysteine 55. An Isoleucine amide modification is found at isoleucine 59. Positions 63–67 are excised as a propeptide; sequence ATFQE.

It belongs to the conotoxin I2 superfamily. In terms of tissue distribution, expressed by the venom duct.

Its subcellular location is the secreted. Inhibits the vertebrate voltage-gated potassium channels Kv1.1/KCNA1 and Kv1.3/KCNA3. This is Kappa-conotoxin-like 1 from Conus vexillum (Flag cone).